A 154-amino-acid chain; its full sequence is Myoglobin (154 aa).

One can recognise a Globin domain in the interval 2–148; it reads VLSDGEWQLV…FRKDIAAKYK (147 aa). Serine 4 carries the phosphoserine modification. Histidine 65 serves as a coordination point for nitrite. Histidine 65 is a binding site for O2. Threonine 68 is modified (phosphothreonine). Histidine 94 serves as a coordination point for heme b.

Belongs to the globin family. In terms of assembly, monomeric.

The protein resides in the cytoplasm. It is found in the sarcoplasm. It catalyses the reaction Fe(III)-heme b-[protein] + nitric oxide + H2O = Fe(II)-heme b-[protein] + nitrite + 2 H(+). The catalysed reaction is H2O2 + AH2 = A + 2 H2O. Functionally, monomeric heme protein which primary function is to store oxygen and facilitate its diffusion within muscle tissues. Reversibly binds oxygen through a pentacoordinated heme iron and enables its timely and efficient release as needed during periods of heightened demand. Depending on the oxidative conditions of tissues and cells, and in addition to its ability to bind oxygen, it also has a nitrite reductase activity whereby it regulates the production of bioactive nitric oxide. Under stress conditions, like hypoxia and anoxia, it also protects cells against reactive oxygen species thanks to its pseudoperoxidase activity. The polypeptide is Myoglobin (Balaena mysticetus (Bowhead whale)).